The chain runs to 250 residues: tRNA (guanine-N(1)-)-methyltransferase (250 aa).

S-adenosyl-L-methionine-binding positions include Gly116 and 136–141; that span reads IGDYVL.

Belongs to the RNA methyltransferase TrmD family. As to quaternary structure, homodimer.

The protein resides in the cytoplasm. It carries out the reaction guanosine(37) in tRNA + S-adenosyl-L-methionine = N(1)-methylguanosine(37) in tRNA + S-adenosyl-L-homocysteine + H(+). In terms of biological role, specifically methylates guanosine-37 in various tRNAs. The chain is tRNA (guanine-N(1)-)-methyltransferase from Pseudomonas fluorescens (strain ATCC BAA-477 / NRRL B-23932 / Pf-5).